The primary structure comprises 182 residues: Protein SrpB (182 aa).

4 helical membrane-spanning segments follow: residues 11–31 (WLGL…IGLN), 43–63 (TFTL…QAEG), 73–93 (LSRT…GLIL), and 116–136 (IWIT…LGLI).

This sequence belongs to the MgtC/SapB family.

It is found in the cell membrane. The protein is Protein SrpB (srpB) of Synechococcus elongatus (strain ATCC 33912 / PCC 7942 / FACHB-805) (Anacystis nidulans R2).